Consider the following 357-residue polypeptide: Sorbitol dehydrogenase (357 aa).

Residue Ala-2 is modified to N-acetylalanine. Cys-45 lines the Zn(2+) pocket. Tyr-51 contacts substrate. Positions 70 and 71 each coordinate Zn(2+). Glu-156 contacts substrate. Residue Ser-169 is modified to Phosphoserine. Residues Val-184, Asp-204, Arg-209, 273–275 (VGM), and 297–299 (VFR) each bind NAD(+). Substrate contacts are provided by Arg-299 and Tyr-300.

Belongs to the zinc-containing alcohol dehydrogenase family. As to quaternary structure, homotetramer. Zn(2+) is required as a cofactor. As to expression, testis has the highest level of expression, followed by kidney, liver, and lung. Low levels of expression are also observed in lens, brain, and skeletal muscle. Expressed in sperm flagellum and very low expression in the sperm head.

The protein localises to the mitochondrion membrane. Its subcellular location is the cell projection. It is found in the cilium. The protein resides in the flagellum. It catalyses the reaction keto-D-fructose + NADH + H(+) = D-sorbitol + NAD(+). It carries out the reaction xylitol + NAD(+) = D-xylulose + NADH + H(+). The enzyme catalyses L-iditol + NAD(+) = keto-L-sorbose + NADH + H(+). Inhibited in vitro by p-hydroxymercuribenzoate, EDTA, l,l0-phenanthroline and N-ethylmaleimide. Its function is as follows. Polyol dehydrogenase that catalyzes the reversible NAD(+)-dependent oxidation of various sugar alcohols. Is active with D-sorbitol (D-glucitol) leading to the C2-oxidized product D-fructose. Is a key enzyme in the polyol pathway that interconverts glucose and fructose via sorbitol, which constitutes an important alternate route for glucose metabolism. May play a role in sperm motility by using sorbitol as an alternative energy source for sperm motility and protein tyrosine phosphorylation. Has no activity on ethanol. Cannot use NADP(+) as the electron acceptor. This Mus musculus (Mouse) protein is Sorbitol dehydrogenase (Sord).